The chain runs to 27 residues: Cupiennin-3c (27 aa).

Expressed by the venom gland.

The protein localises to the secreted. The sequence is that of Cupiennin-3c from Cupiennius salei (American wandering spider).